Consider the following 249-residue polypeptide: Leucyl/phenylalanyl-tRNA--protein transferase (249 aa).

Residues 1–21 (MSRTLPHLLSPDPASPFPPAE) form a disordered region.

Belongs to the L/F-transferase family.

The protein localises to the cytoplasm. The enzyme catalyses N-terminal L-lysyl-[protein] + L-leucyl-tRNA(Leu) = N-terminal L-leucyl-L-lysyl-[protein] + tRNA(Leu) + H(+). It carries out the reaction N-terminal L-arginyl-[protein] + L-leucyl-tRNA(Leu) = N-terminal L-leucyl-L-arginyl-[protein] + tRNA(Leu) + H(+). It catalyses the reaction L-phenylalanyl-tRNA(Phe) + an N-terminal L-alpha-aminoacyl-[protein] = an N-terminal L-phenylalanyl-L-alpha-aminoacyl-[protein] + tRNA(Phe). In terms of biological role, functions in the N-end rule pathway of protein degradation where it conjugates Leu, Phe and, less efficiently, Met from aminoacyl-tRNAs to the N-termini of proteins containing an N-terminal arginine or lysine. This Xanthomonas campestris pv. campestris (strain B100) protein is Leucyl/phenylalanyl-tRNA--protein transferase.